We begin with the raw amino-acid sequence, 613 residues long: 4-hydroxy-3-methylbut-2-en-1-yl diphosphate synthase (flavodoxin) (613 aa).

[4Fe-4S] cluster is bound by residues Cys-514, Cys-517, Cys-548, and Glu-555.

It belongs to the IspG family. It depends on [4Fe-4S] cluster as a cofactor.

It catalyses the reaction (2E)-4-hydroxy-3-methylbut-2-enyl diphosphate + oxidized [flavodoxin] + H2O + 2 H(+) = 2-C-methyl-D-erythritol 2,4-cyclic diphosphate + reduced [flavodoxin]. The protein operates within isoprenoid biosynthesis; isopentenyl diphosphate biosynthesis via DXP pathway; isopentenyl diphosphate from 1-deoxy-D-xylulose 5-phosphate: step 5/6. In terms of biological role, converts 2C-methyl-D-erythritol 2,4-cyclodiphosphate (ME-2,4cPP) into 1-hydroxy-2-methyl-2-(E)-butenyl 4-diphosphate. The chain is 4-hydroxy-3-methylbut-2-en-1-yl diphosphate synthase (flavodoxin) from Chlamydia pneumoniae (Chlamydophila pneumoniae).